We begin with the raw amino-acid sequence, 459 residues long: UDP-N-acetylmuramate--L-alanine ligase (459 aa).

113–119 (GSHGKTT) contributes to the ATP binding site.

The protein belongs to the MurCDEF family.

The protein resides in the cytoplasm. The catalysed reaction is UDP-N-acetyl-alpha-D-muramate + L-alanine + ATP = UDP-N-acetyl-alpha-D-muramoyl-L-alanine + ADP + phosphate + H(+). The protein operates within cell wall biogenesis; peptidoglycan biosynthesis. Functionally, cell wall formation. The polypeptide is UDP-N-acetylmuramate--L-alanine ligase (Persephonella marina (strain DSM 14350 / EX-H1)).